Consider the following 437-residue polypeptide: Xylose isomerase (437 aa).

Residues His-101 and Asp-104 contribute to the active site. Mg(2+) contacts are provided by Glu-232, Glu-268, His-271, Asp-296, Asp-307, Asp-309, and Asp-339.

The protein belongs to the xylose isomerase family. In terms of assembly, homotetramer. Mg(2+) is required as a cofactor.

The protein localises to the cytoplasm. It carries out the reaction alpha-D-xylose = alpha-D-xylulofuranose. This Actinobacillus succinogenes (strain ATCC 55618 / DSM 22257 / CCUG 43843 / 130Z) protein is Xylose isomerase.